Here is a 161-residue protein sequence, read N- to C-terminus: Large ribosomal subunit protein uL15 (161 aa).

Residues 1–43 are disordered; that stretch reads MKLSDIADNAGSRKKRMRIGRGIGSGKGKTGGRGGKGQTARSG. Over residues 21–37 the composition is skewed to gly residues; sequence RGIGSGKGKTGGRGGKG.

Belongs to the universal ribosomal protein uL15 family. As to quaternary structure, part of the 50S ribosomal subunit.

In terms of biological role, binds to the 23S rRNA. This is Large ribosomal subunit protein uL15 from Nitrobacter hamburgensis (strain DSM 10229 / NCIMB 13809 / X14).